Reading from the N-terminus, the 84-residue chain is Cytochrome b559 subunit alpha (84 aa).

The helical transmembrane segment at 22–36 (IIHIPAITILFASGF) threads the bilayer. His24 lines the heme pocket.

This sequence belongs to the PsbE/PsbF family. Heterodimer of an alpha subunit and a beta subunit. PSII is composed of 1 copy each of membrane proteins PsbA, PsbB, PsbC, PsbD, PsbE, PsbF, PsbH, PsbI, PsbJ, PsbK, PsbL, PsbM, PsbT, PsbX, Psb30/Ycf12, peripheral proteins PsbO, CyanoQ (PsbQ), PsbU, PsbV and a large number of cofactors. It forms dimeric complexes. Heme b serves as cofactor.

The protein resides in the cell inner membrane. Functionally, this b-type cytochrome is tightly associated with the reaction center of photosystem II (PSII). PSII is a light-driven water:plastoquinone oxidoreductase that uses light energy to abstract electrons from H(2)O, generating O(2) and a proton gradient subsequently used for ATP formation. It consists of a core antenna complex that captures photons, and an electron transfer chain that converts photonic excitation into a charge separation. The chain is Cytochrome b559 subunit alpha from Gloeobacter violaceus (strain ATCC 29082 / PCC 7421).